The primary structure comprises 577 residues: Arginine--tRNA ligase (577 aa).

Residues 122–132 (PNVAKEMHVGH) carry the 'HIGH' region motif.

The protein belongs to the class-I aminoacyl-tRNA synthetase family. As to quaternary structure, monomer.

It localises to the cytoplasm. The catalysed reaction is tRNA(Arg) + L-arginine + ATP = L-arginyl-tRNA(Arg) + AMP + diphosphate. The polypeptide is Arginine--tRNA ligase (Enterobacter sp. (strain 638)).